The sequence spans 83 residues: Translational regulator CsrA (83 aa).

This sequence belongs to the CsrA/RsmA family. In terms of assembly, homodimer; the beta-strands of each monomer intercalate to form a hydrophobic core, while the alpha-helices form wings that extend away from the core.

It is found in the cytoplasm. A translational regulator that binds mRNA to regulate translation initiation and/or mRNA stability. Usually binds in the 5'-UTR at or near the Shine-Dalgarno sequence preventing ribosome-binding, thus repressing translation. Its main target seems to be the major flagellin gene, while its function is anatagonized by FliW. In Thermotoga maritima (strain ATCC 43589 / DSM 3109 / JCM 10099 / NBRC 100826 / MSB8), this protein is Translational regulator CsrA.